Reading from the N-terminus, the 860-residue chain is Ubiquitin fusion degradation protein 3 homolog (860 aa).

6 WD repeats span residues 27 to 65, 71 to 112, 115 to 154, 163 to 203, 204 to 242, and 244 to 283; these read AHKS…YTKT, PKGI…PYAI, EHKQ…SSSF, GHTL…SVFK, GHTD…ILRK, and ATQA…DGNL. The region spanning 397–497 is the PFU domain; that stretch reads PIHYLEEITR…DKLSKGAASA (101 aa). Positions 494-585 are disordered; that stretch reads AASAQSGYED…LPQNKKKPRG (92 aa). The region spanning 586–856 is the PUL domain; the sequence is PLVPVPDFYI…KNIARDIVEM (271 aa).

Belongs to the WD repeat PLAP family. Interacts with cdc-48.1. In terms of tissue distribution, expressed in intestine (at protein level).

The protein localises to the cytoplasm. In terms of biological role, plays a role in protein ubiquitination, sorting and degradation through its association with cdc-48.1 and/or cdc-48.2. The chain is Ubiquitin fusion degradation protein 3 homolog from Caenorhabditis elegans.